A 209-amino-acid polypeptide reads, in one-letter code: Ribosomal RNA large subunit methyltransferase E (209 aa).

Residues G63, W65, D83, D99, and D124 each coordinate S-adenosyl-L-methionine. K164 serves as the catalytic Proton acceptor. Positions 191–209 (EASRGRSREVYIVAMGYMG) constitute a TRAM domain.

It belongs to the class I-like SAM-binding methyltransferase superfamily. RNA methyltransferase RlmE family.

The protein resides in the cytoplasm. It catalyses the reaction uridine(2552) in 23S rRNA + S-adenosyl-L-methionine = 2'-O-methyluridine(2552) in 23S rRNA + S-adenosyl-L-homocysteine + H(+). Functionally, specifically methylates the uridine in position 2552 of 23S rRNA at the 2'-O position of the ribose in the fully assembled 50S ribosomal subunit. The chain is Ribosomal RNA large subunit methyltransferase E from Histophilus somni (strain 129Pt) (Haemophilus somnus).